Here is a 535-residue protein sequence, read N- to C-terminus: CTP synthase (535 aa).

The segment at Met-1–Leu-267 is amidoligase domain. CTP is bound at residue Ser-13. Ser-13 contacts UTP. Ser-14–Ile-19 is an ATP binding site. Tyr-54 contributes to the L-glutamine binding site. An ATP-binding site is contributed by Asp-71. Mg(2+) is bound by residues Asp-71 and Glu-141. CTP-binding positions include Asp-148 to Glu-150, Lys-188 to Gln-193, and Lys-224. Residues Lys-188–Gln-193 and Lys-224 contribute to the UTP site. Arg-240 to Ala-242 is a binding site for ATP. A Glutamine amidotransferase type-1 domain is found at Lys-292–Ser-534. Gly-354 is a binding site for L-glutamine. The Nucleophile; for glutamine hydrolysis role is filled by Cys-381. Residues Leu-382–Gln-385, Glu-405, and Arg-462 contribute to the L-glutamine site. Active-site residues include His-507 and Glu-509.

This sequence belongs to the CTP synthase family. Homotetramer.

It catalyses the reaction UTP + L-glutamine + ATP + H2O = CTP + L-glutamate + ADP + phosphate + 2 H(+). It carries out the reaction L-glutamine + H2O = L-glutamate + NH4(+). The enzyme catalyses UTP + NH4(+) + ATP = CTP + ADP + phosphate + 2 H(+). It functions in the pathway pyrimidine metabolism; CTP biosynthesis via de novo pathway; CTP from UDP: step 2/2. Its activity is regulated as follows. Allosterically activated by GTP, when glutamine is the substrate; GTP has no effect on the reaction when ammonia is the substrate. The allosteric effector GTP functions by stabilizing the protein conformation that binds the tetrahedral intermediate(s) formed during glutamine hydrolysis. Inhibited by the product CTP, via allosteric rather than competitive inhibition. Catalyzes the ATP-dependent amination of UTP to CTP with either L-glutamine or ammonia as the source of nitrogen. Regulates intracellular CTP levels through interactions with the four ribonucleotide triphosphates. In Bacillus anthracis (strain A0248), this protein is CTP synthase.